Here is a 78-residue protein sequence, read N- to C-terminus: MSRVCQVTGKRPVSGNNRSHAMNATKRRFLPNLHSHRFWVESEKRFVTLRVSAKGMRVIDKKGIETVLADLCVRGEKY.

A disordered region spans residues 1-21; it reads MSRVCQVTGKRPVSGNNRSHA.

This sequence belongs to the bacterial ribosomal protein bL28 family.

The protein is Large ribosomal subunit protein bL28 of Sodalis glossinidius (strain morsitans).